The sequence spans 428 residues: Glutamine synthetase, chloroplastic (428 aa).

Residues 1–49 (MAQILAASPTCQMRLTKPSSIASSKLWNSVVLKQKKQSSSKVRSFKVMA) constitute a chloroplast transit peptide. Residues 75-155 (IIAEYIWIGG…VICDTYTPAG (81 aa)) enclose the GS beta-grasp domain. Positions 94-120 (RTLEKPVEDPSELPKWNYDGSSTGQAP) are disordered. Position 104 is a phosphoserine (Ser-104). Residues 159-428 (PTNKRARAAE…LAAQKLSLKV (270 aa)) form the GS catalytic domain.

This sequence belongs to the glutamine synthetase family. In terms of assembly, homooctamer.

The protein localises to the plastid. Its subcellular location is the chloroplast. It catalyses the reaction L-glutamate + NH4(+) + ATP = L-glutamine + ADP + phosphate + H(+). In terms of biological role, the light-modulated chloroplast enzyme, encoded by a nuclear gene and expressed primarily in leaves, is responsible for the reassimilation of the ammonia generated by photorespiration. This Brassica napus (Rape) protein is Glutamine synthetase, chloroplastic (GLN2).